The chain runs to 216 residues: Large ribosomal subunit protein uL3 (216 aa).

Q153 carries the N5-methylglutamine modification.

The protein belongs to the universal ribosomal protein uL3 family. In terms of assembly, part of the 50S ribosomal subunit. Forms a cluster with proteins L14 and L19. Methylated by PrmB.

Functionally, one of the primary rRNA binding proteins, it binds directly near the 3'-end of the 23S rRNA, where it nucleates assembly of the 50S subunit. This Burkholderia multivorans (strain ATCC 17616 / 249) protein is Large ribosomal subunit protein uL3.